Here is a 206-residue protein sequence, read N- to C-terminus: Large ribosomal subunit protein uL4 (206 aa).

Positions 60–84 are disordered; sequence TAKPFKQKGTGHARQGSKRSPQFRG. Basic residues predominate over residues 64–76; it reads FKQKGTGHARQGS.

Belongs to the universal ribosomal protein uL4 family. As to quaternary structure, part of the 50S ribosomal subunit.

Functionally, one of the primary rRNA binding proteins, this protein initially binds near the 5'-end of the 23S rRNA. It is important during the early stages of 50S assembly. It makes multiple contacts with different domains of the 23S rRNA in the assembled 50S subunit and ribosome. In terms of biological role, forms part of the polypeptide exit tunnel. The protein is Large ribosomal subunit protein uL4 of Rhodospirillum rubrum (strain ATCC 11170 / ATH 1.1.1 / DSM 467 / LMG 4362 / NCIMB 8255 / S1).